Here is a 134-residue protein sequence, read N- to C-terminus: Small ribosomal subunit protein uS9 (134 aa).

Positions 109 to 134 (DARRTEPHKPSKSSKGPRAKRQKSYR) are disordered. Basic residues predominate over residues 118-134 (PSKSSKGPRAKRQKSYR).

This sequence belongs to the universal ribosomal protein uS9 family.

This is Small ribosomal subunit protein uS9 from Methanococcus maripaludis (strain DSM 14266 / JCM 13030 / NBRC 101832 / S2 / LL).